The sequence spans 265 residues: 2-C-methyl-D-erythritol 4-phosphate cytidylyltransferase (265 aa).

Positions D231 to R241 are enriched in basic and acidic residues. Residues D231–V265 are disordered. A compositionally biased stretch (low complexity) spans S253–V265.

This sequence belongs to the IspD/TarI cytidylyltransferase family. IspD subfamily.

The catalysed reaction is 2-C-methyl-D-erythritol 4-phosphate + CTP + H(+) = 4-CDP-2-C-methyl-D-erythritol + diphosphate. Its pathway is isoprenoid biosynthesis; isopentenyl diphosphate biosynthesis via DXP pathway; isopentenyl diphosphate from 1-deoxy-D-xylulose 5-phosphate: step 2/6. In terms of biological role, catalyzes the formation of 4-diphosphocytidyl-2-C-methyl-D-erythritol from CTP and 2-C-methyl-D-erythritol 4-phosphate (MEP). This Xanthomonas campestris pv. campestris (strain B100) protein is 2-C-methyl-D-erythritol 4-phosphate cytidylyltransferase.